A 205-amino-acid polypeptide reads, in one-letter code: Ras-like protein 3 (205 aa).

Residue 16–23 (GGGGVGKS) participates in GTP binding. The Effector region signature appears at 38–46 (YDPTIEDSY). GTP-binding positions include 63–67 (DTAGQ) and 122–125 (NKCD). A Cysteine methyl ester modification is found at C202. C202 is lipidated: S-farnesyl cysteine. Residues 203–205 (ILM) constitute a propeptide, removed in mature form.

The protein belongs to the small GTPase superfamily. Ras family.

Its subcellular location is the cell membrane. The enzyme catalyses GTP + H2O = GDP + phosphate + H(+). Alternates between an inactive form bound to GDP and an active form bound to GTP. Activated by a guanine nucleotide-exchange factor (GEF) and inactivated by a GTPase-activating protein (GAP). The polypeptide is Ras-like protein 3 (RAS3) (Mucor circinelloides f. lusitanicus (Mucor racemosus var. lusitanicus)).